Consider the following 362-residue polypeptide: Peptide chain release factor 1 (362 aa).

The residue at position 236 (Q236) is an N5-methylglutamine.

It belongs to the prokaryotic/mitochondrial release factor family. Methylated by PrmC. Methylation increases the termination efficiency of RF1.

The protein resides in the cytoplasm. Functionally, peptide chain release factor 1 directs the termination of translation in response to the peptide chain termination codons UAG and UAA. The protein is Peptide chain release factor 1 of Lactobacillus johnsonii (strain CNCM I-12250 / La1 / NCC 533).